The primary structure comprises 157 residues: Crossover junction endodeoxyribonuclease RuvC (157 aa).

Catalysis depends on residues Asp-9, Glu-70, and Asp-142. Mg(2+) is bound by residues Asp-9, Glu-70, and Asp-142.

This sequence belongs to the RuvC family. As to quaternary structure, homodimer which binds Holliday junction (HJ) DNA. The HJ becomes 2-fold symmetrical on binding to RuvC with unstacked arms; it has a different conformation from HJ DNA in complex with RuvA. In the full resolvosome a probable DNA-RuvA(4)-RuvB(12)-RuvC(2) complex forms which resolves the HJ. Requires Mg(2+) as cofactor.

The protein localises to the cytoplasm. It carries out the reaction Endonucleolytic cleavage at a junction such as a reciprocal single-stranded crossover between two homologous DNA duplexes (Holliday junction).. Functionally, the RuvA-RuvB-RuvC complex processes Holliday junction (HJ) DNA during genetic recombination and DNA repair. Endonuclease that resolves HJ intermediates. Cleaves cruciform DNA by making single-stranded nicks across the HJ at symmetrical positions within the homologous arms, yielding a 5'-phosphate and a 3'-hydroxyl group; requires a central core of homology in the junction. The consensus cleavage sequence is 5'-(A/T)TT(C/G)-3'. Cleavage occurs on the 3'-side of the TT dinucleotide at the point of strand exchange. HJ branch migration catalyzed by RuvA-RuvB allows RuvC to scan DNA until it finds its consensus sequence, where it cleaves and resolves the cruciform DNA. The chain is Crossover junction endodeoxyribonuclease RuvC from Cyanothece sp. (strain PCC 7425 / ATCC 29141).